A 183-amino-acid chain; its full sequence is Dual-action ribosomal maturation protein DarP (183 aa).

The segment at 1 to 27 (MSSHSQEPVGEENFDDSEYDRPSKSQV) is disordered. Acidic residues predominate over residues 9-18 (VGEENFDDSE).

The protein belongs to the DarP family.

Its subcellular location is the cytoplasm. Its function is as follows. Member of a network of 50S ribosomal subunit biogenesis factors which assembles along the 30S-50S interface, preventing incorrect 23S rRNA structures from forming. Promotes peptidyl transferase center (PTC) maturation. This is Dual-action ribosomal maturation protein DarP from Bordetella parapertussis (strain 12822 / ATCC BAA-587 / NCTC 13253).